The following is a 351-amino-acid chain: CCN family member 3 (351 aa).

The N-terminal stretch at 1-21 (MSVFLRKQCLCLGFLLLHLLN) is a signal peptide. The IGFBP N-terminal domain maps to 25-99 (ATLRCPSRCP…NNETGICMVP (75 aa)). 6 cysteine pairs are disulfide-bonded: Cys29/Cys55, Cys33/Cys57, Cys37/Cys58, Cys44/Cys61, Cys69/Cys83, and Cys75/Cys96. An N-linked (GlcNAc...) asparagine glycan is attached at Asn91. The 67-residue stretch at 102–168 (DNCVFDGVIY…GECCEKWTCG (67 aa)) folds into the VWFC domain. The 46-residue stretch at 199 to 244 (NCIEQTTEWSACSKSCGMGLSTRVTNRNLQCEMVKQTRLCMVRPCE) folds into the TSP type-1 domain. Cys238 is lipidated: S-palmitoyl cysteine. Intrachain disulfides connect Cys258/Cys295, Cys275/Cys309, Cys286/Cys325, Cys289/Cys327, and Cys294/Cys331. The CTCK domain occupies 258–332 (CLRTKKSLKS…GTCTCHSNCP (75 aa)). Asn274 carries an N-linked (GlcNAc...) asparagine glycan.

The protein belongs to the CCN family. As to quaternary structure, interacts with FBLN1. Interacts (via CTCK domain) with NOTCH1 (via the EGF-like repeat region). Interacts with GJA1/CX43. Interacts with ITGA5:ITGB1, ITGAV:ITGB3 and ITGAV:ITGB5. Interacts with ZDHHC22; the interaction may lead to CCN3 palmitoylation. May be palmitoylated on Cys-238, which is important for extracellular secretion. Widely expressed. Highly expressed in neurons of dorsal root ganglia and dorsal horn of the spinal cord (at protein level). Expressed in astrocytes (at protein level). In cartilage, dominantly expressed in the chondrocyte territorial matrix.

It localises to the secreted. The protein resides in the cytoplasm. Its subcellular location is the cell junction. The protein localises to the gap junction. Its function is as follows. Immediate-early protein playing a role in various cellular processes including proliferation, adhesion, migration, differentiation and survival. Acts by binding to integrins or membrane receptors such as NOTCH1. Essential regulator of hematopoietic stem and progenitor cell function. Inhibits myogenic differentiation through the activation of Notch-signaling pathway. Inhibits vascular smooth muscle cells proliferation by increasing expression of cell-cycle regulators such as CDKN2B or CDKN1A independently of TGFB1 signaling. Ligand of integrins ITGAV:ITGB3 and ITGA5:ITGB1, acts directly upon endothelial cells to stimulate pro-angiogenic activities and induces angiogenesis. In endothelial cells, supports cell adhesion, induces directed cell migration (chemotaxis) and promotes cell survival. Also plays a role in cutaneous wound healing acting as integrin receptor ligand. Supports skin fibroblast adhesion through ITGA5:ITGB1 and ITGA6:ITGB1 and induces fibroblast chemotaxis through ITGAV:ITGB5. Seems to enhance bFGF-induced DNA synthesis in fibroblasts. Involved in bone regeneration as a negative regulator. Enhances the articular chondrocytic phenotype, whereas it repressed the one representing endochondral ossification. Impairs pancreatic beta-cell function, inhibits beta-cell proliferation and insulin secretion. Plays a role as negative regulator of endothelial pro-inflammatory activation reducing monocyte adhesion, its anti-inflammatory effects occur secondary to the inhibition of NF-kappaB signaling pathway. Contributes to the control and coordination of inflammatory processes in atherosclerosis. Attenuates inflammatory pain through regulation of IL1B- and TNF-induced MMP9, MMP2 and CCL2 expression. Inhibits MMP9 expression through ITGB1 engagement. Brain osteoanabolic hormone. During lactation, maintains the maternal skeleton and viability of offspring. The sequence is that of CCN family member 3 (Ccn3) from Rattus norvegicus (Rat).